Reading from the N-terminus, the 176-residue chain is Inorganic pyrophosphatase (176 aa).

Lys31, Arg45, and Tyr57 together coordinate substrate. The Mg(2+) site is built by Asp67, Asp72, and Asp104. Tyr141 is a substrate binding site.

This sequence belongs to the PPase family. Homohexamer. Mg(2+) is required as a cofactor.

The protein localises to the cytoplasm. It catalyses the reaction diphosphate + H2O = 2 phosphate + H(+). Catalyzes the hydrolysis of inorganic pyrophosphate (PPi) forming two phosphate ions. In Methanopyrus kandleri (strain AV19 / DSM 6324 / JCM 9639 / NBRC 100938), this protein is Inorganic pyrophosphatase.